A 656-amino-acid polypeptide reads, in one-letter code: DNA ligase (656 aa).

Residues 32–36 (DAVYD) and 81–82 (SL) contribute to the NAD(+) site. Lys-112 acts as the N6-AMP-lysine intermediate in catalysis. 3 residues coordinate NAD(+): Arg-133, Glu-167, and Lys-306. Positions 400, 403, 416, and 421 each coordinate Zn(2+). The region spanning 577–656 (KSSSVFNNKT…ELLKRLKELD (80 aa)) is the BRCT domain.

The protein belongs to the NAD-dependent DNA ligase family. LigA subfamily. Mg(2+) serves as cofactor. It depends on Mn(2+) as a cofactor.

The catalysed reaction is NAD(+) + (deoxyribonucleotide)n-3'-hydroxyl + 5'-phospho-(deoxyribonucleotide)m = (deoxyribonucleotide)n+m + AMP + beta-nicotinamide D-nucleotide.. In terms of biological role, DNA ligase that catalyzes the formation of phosphodiester linkages between 5'-phosphoryl and 3'-hydroxyl groups in double-stranded DNA using NAD as a coenzyme and as the energy source for the reaction. It is essential for DNA replication and repair of damaged DNA. This Helicobacter pylori (strain HPAG1) protein is DNA ligase.